The chain runs to 60 residues: DNA-directed RNA polymerase subunit Rpo6 (60 aa).

The protein belongs to the archaeal Rpo6/eukaryotic RPB6 RNA polymerase subunit family. In terms of assembly, part of the RNA polymerase complex.

It is found in the cytoplasm. The catalysed reaction is RNA(n) + a ribonucleoside 5'-triphosphate = RNA(n+1) + diphosphate. In terms of biological role, DNA-dependent RNA polymerase (RNAP) catalyzes the transcription of DNA into RNA using the four ribonucleoside triphosphates as substrates. This Methanothrix thermoacetophila (strain DSM 6194 / JCM 14653 / NBRC 101360 / PT) (Methanosaeta thermophila) protein is DNA-directed RNA polymerase subunit Rpo6.